A 551-amino-acid chain; its full sequence is Protein GPR107 (551 aa).

An N-terminal signal peptide occupies residues 1–33; that stretch reads MAVPVPLGRFGSFCLRLLRLLALLELLVHPVLG. Over 40–262 the chain is Extracellular; it reads LKDDVRHKVH…YLSAGEIPLP (223 aa). Residues Asn64 and Asn209 are each glycosylated (N-linked (GlcNAc...) asparagine). An intrachain disulfide couples Cys106 to Cys226. A helical membrane pass occupies residues 263–283; it reads KLYVSMALFFFLSGTIWIHIL. The Cytoplasmic segment spans residues 284–292; it reads RKRRNDVFK. The helical transmembrane segment at 293–313 threads the bilayer; the sequence is IHWLMAALPFTKSLSLVFHAI. At 314-336 the chain is on the extracellular side; it reads DYHYISSQGFPIEGWAVVYYITH. A helical transmembrane segment spans residues 337 to 357; sequence LLKGALLFITIALIGTGWAFI. Residues 358 to 367 lie on the Cytoplasmic side of the membrane; that stretch reads KHILSDKDKK. A helical membrane pass occupies residues 368 to 388; sequence IFMIVIPLQVLANVAYIIIES. At 389 to 401 the chain is on the extracellular side; it reads TEEGTTEYGLWKD. A helical membrane pass occupies residues 402–422; that stretch reads SLFLVDLLCCGAILFPVVWSI. Over 423–449 the chain is Cytoplasmic; that stretch reads RHLQEASATDGKAAINLAKLRLFRHYY. Residues 450–470 traverse the membrane as a helical segment; the sequence is VLIVCYIYFTRIIAFLLKFAV. At 471–475 the chain is on the extracellular side; that stretch reads PFQWK. The chain crosses the membrane as a helical span at residues 476 to 495; the sequence is WLYQLLDETATLVFFVLTGY. The Cytoplasmic segment spans residues 496-551; the sequence is KFRPASDNPYLQLSQEDDDLEMESVVTTSGVMENMKKVKKVSNGAVEPQGSWEGTA. Position 537 is a phosphoserine (Ser537).

Belongs to the LU7TM family. Post-translationally, cleaved by FURIN to yield two fragments that remain associated via a disulfide bond.

The protein resides in the cell membrane. It is found in the golgi apparatus. It localises to the trans-Golgi network membrane. Its function is as follows. Has been proposed to act as a receptor for neuronostatin, a peptide derived from the somatostatin/SST precursor. Involved in blood sugar regulation through the induction of glucagon in response to low glucose. The chain is Protein GPR107 (Gpr107) from Mus musculus (Mouse).